Here is a 238-residue protein sequence, read N- to C-terminus: Sugar fermentation stimulation protein homolog (238 aa).

It belongs to the SfsA family.

The polypeptide is Sugar fermentation stimulation protein homolog (Alkalilimnicola ehrlichii (strain ATCC BAA-1101 / DSM 17681 / MLHE-1)).